The sequence spans 209 residues: Large ribosomal subunit protein uL3 (209 aa).

The interval 117–142 (FQGPIKRHGQSRGPETHGSRYHRRPG) is disordered.

The protein belongs to the universal ribosomal protein uL3 family. Part of the 50S ribosomal subunit. Forms a cluster with proteins L14 and L19.

Functionally, one of the primary rRNA binding proteins, it binds directly near the 3'-end of the 23S rRNA, where it nucleates assembly of the 50S subunit. This is Large ribosomal subunit protein uL3 from Clostridioides difficile (strain 630) (Peptoclostridium difficile).